The chain runs to 88 residues: U13-theraphotoxin-Cg1a (88 aa).

An N-terminal signal peptide occupies residues 1–21; sequence MKVSVLITLAVLGVMFVWASA. Positions 22-52 are excised as a propeptide; the sequence is AELEQSGSDQKDSDSPAWLKSMERIFQSEER. 3 cysteine pairs are disulfide-bonded: Cys54-Cys68, Cys61-Cys73, and Cys67-Cys80.

Belongs to the neurotoxin 10 (Hwtx-1) family. 41 (Jztx-36) subfamily. As to expression, expressed by the venom gland.

The protein resides in the secreted. Probable ion channel inhibitor. In Chilobrachys guangxiensis (Chinese earth tiger tarantula), this protein is U13-theraphotoxin-Cg1a.